We begin with the raw amino-acid sequence, 450 residues long: Probable transporter MCH1 (450 aa).

A run of 12 helical transmembrane segments spans residues Ala32–Tyr52, Val69–Ser89, Met96–Phe116, Val127–Thr147, Leu157–Leu177, Leu199–Met219, Pro255–Leu275, Val290–Ile309, Met320–Ala340, Leu355–Trp375, Ala378–Phe398, and Val423–Leu443.

This sequence belongs to the major facilitator superfamily.

It localises to the vacuole membrane. Probable transporter. The polypeptide is Probable transporter MCH1 (MCH1) (Eremothecium gossypii (strain ATCC 10895 / CBS 109.51 / FGSC 9923 / NRRL Y-1056) (Yeast)).